A 208-amino-acid chain; its full sequence is Small ribosomal subunit protein uS4 (208 aa).

Residues 98–159 enclose the S4 RNA-binding domain; that stretch reads RRLDNVIYRL…KSRTVAVITN (62 aa).

This sequence belongs to the universal ribosomal protein uS4 family. Part of the 30S ribosomal subunit. Contacts protein S5. The interaction surface between S4 and S5 is involved in control of translational fidelity.

Its function is as follows. One of the primary rRNA binding proteins, it binds directly to 16S rRNA where it nucleates assembly of the body of the 30S subunit. In terms of biological role, with S5 and S12 plays an important role in translational accuracy. This is Small ribosomal subunit protein uS4 from Desulfatibacillum aliphaticivorans.